A 211-amino-acid polypeptide reads, in one-letter code: Uracil phosphoribosyltransferase (211 aa).

Residues arginine 79, arginine 104, and 131 to 139 contribute to the 5-phospho-alpha-D-ribose 1-diphosphate site; that span reads DPMLATGGS. Uracil contacts are provided by residues isoleucine 196 and 201–203; that span reads GDA. Aspartate 202 contributes to the 5-phospho-alpha-D-ribose 1-diphosphate binding site.

The protein belongs to the UPRTase family. Mg(2+) serves as cofactor.

It catalyses the reaction UMP + diphosphate = 5-phospho-alpha-D-ribose 1-diphosphate + uracil. The protein operates within pyrimidine metabolism; UMP biosynthesis via salvage pathway; UMP from uracil: step 1/1. Allosterically activated by GTP. Its function is as follows. Catalyzes the conversion of uracil and 5-phospho-alpha-D-ribose 1-diphosphate (PRPP) to UMP and diphosphate. This is Uracil phosphoribosyltransferase from Lactococcus lactis subsp. lactis (strain IL1403) (Streptococcus lactis).